Reading from the N-terminus, the 779-residue chain is FAD-dependent monooxygenase BOA8 (779 aa).

FAD is bound by residues Glu-85, Arg-128, Asp-331, and Ala-344. Helical transmembrane passes span 471 to 491, 504 to 524, 542 to 562, 587 to 607, 618 to 638, 665 to 685, and 742 to 762; these read AQLA…KTPE, VKLD…IWTI, AFLL…YFFF, ILPL…WSSI, NAWY…KFIV, ILIC…SIAF, and LILT…GLIV.

This sequence belongs to the paxM FAD-dependent monooxygenase family. Requires FAD as cofactor.

Its subcellular location is the membrane. The protein operates within polyketide biosynthesis. Functionally, FAD-dependent monooxygenase; part of the gene cluster B that mediates the biosynthesis of botcinic acid and its botcinin derivatives, acetate-derived polyketides that contribute to virulence when combined with the sesquiterpene botrydial. Botcinic acid and its derivatives have been shown to induce chlorosis and necrosis during host plant infection, but also have antifungal activities. Two polyketide synthases, BOA6 and BOA9, are involved in the biosynthesis of botcinins. BOA6 mediates the formation of the per-methylated tetraketide core by condensation of four units of malonyl-CoA with one unit of acetyl-CoA, which would be methylated in activated methylene groups to yield a bicyclic acid intermediate that could then either be converted to botrylactone derivatives or lose the starter acetate unit through a retro-Claisen type C-C bond cleavage to yield botcinin derivatives. The second polyketide synthase, BOA9, is probably required for the biosynthesis of the tetraketide side chain of botcinins. The methyltransferase (MT) domain within BOA6 is probably responsible for the incorporation of four methyl groups. The trans-enoyl reductase BOA5 might take over the enoyl reductase function of BOA6 that misses an ER domain. The monooxygenases BOA2, BOA3 and BOA4 might be involved in further hydroxylations at C4, C5 and C8, whereas BOA7, close to BOA9, could potentially be involved in the hydroxylation at C4 in the side chain of botcinins. This Botryotinia fuckeliana (strain B05.10) (Noble rot fungus) protein is FAD-dependent monooxygenase BOA8.